Here is a 344-residue protein sequence, read N- to C-terminus: Holliday junction branch migration complex subunit RuvB (344 aa).

A large ATPase domain (RuvB-L) region spans residues 1–181 (MERIVTPAEM…FGVLCAMEYY (181 aa)). Residues Leu-20, Arg-21, Gly-62, Lys-65, Thr-66, Thr-67, 128 to 130 (EDY), Arg-171, Tyr-181, and Arg-218 each bind ATP. Thr-66 contacts Mg(2+). The small ATPAse domain (RuvB-S) stretch occupies residues 182-252 (DENQLKEIVI…EAREALELLE (71 aa)). The interval 255–344 (NQGFDKVDNK…SNKGQTSFFK (90 aa)) is head domain (RuvB-H). Positions 310 and 315 each coordinate DNA.

The protein belongs to the RuvB family. As to quaternary structure, homohexamer. Forms an RuvA(8)-RuvB(12)-Holliday junction (HJ) complex. HJ DNA is sandwiched between 2 RuvA tetramers; dsDNA enters through RuvA and exits via RuvB. An RuvB hexamer assembles on each DNA strand where it exits the tetramer. Each RuvB hexamer is contacted by two RuvA subunits (via domain III) on 2 adjacent RuvB subunits; this complex drives branch migration. In the full resolvosome a probable DNA-RuvA(4)-RuvB(12)-RuvC(2) complex forms which resolves the HJ.

It localises to the cytoplasm. It catalyses the reaction ATP + H2O = ADP + phosphate + H(+). Its function is as follows. The RuvA-RuvB-RuvC complex processes Holliday junction (HJ) DNA during genetic recombination and DNA repair, while the RuvA-RuvB complex plays an important role in the rescue of blocked DNA replication forks via replication fork reversal (RFR). RuvA specifically binds to HJ cruciform DNA, conferring on it an open structure. The RuvB hexamer acts as an ATP-dependent pump, pulling dsDNA into and through the RuvAB complex. RuvB forms 2 homohexamers on either side of HJ DNA bound by 1 or 2 RuvA tetramers; 4 subunits per hexamer contact DNA at a time. Coordinated motions by a converter formed by DNA-disengaged RuvB subunits stimulates ATP hydrolysis and nucleotide exchange. Immobilization of the converter enables RuvB to convert the ATP-contained energy into a lever motion, pulling 2 nucleotides of DNA out of the RuvA tetramer per ATP hydrolyzed, thus driving DNA branch migration. The RuvB motors rotate together with the DNA substrate, which together with the progressing nucleotide cycle form the mechanistic basis for DNA recombination by continuous HJ branch migration. Branch migration allows RuvC to scan DNA until it finds its consensus sequence, where it cleaves and resolves cruciform DNA. This is Holliday junction branch migration complex subunit RuvB from Clostridium botulinum (strain Alaska E43 / Type E3).